Consider the following 243-residue polypeptide: uncharacterized protein (243 aa).

The GP-PDE domain maps to 2–240 (TKIFAHRGAS…DFPEKASALL (239 aa)).

This is an uncharacterized protein from Bacillus subtilis (strain 168).